Here is a 583-residue protein sequence, read N- to C-terminus: Laccase-14 (583 aa).

A signal peptide spans 1–30 (MAPSLGSGSTRILLIVSLLLCLRQQAVVDA). 2 consecutive Plastocyanin-like domains span residues 38 to 158 (HVGN…PRPG) and 168 to 320 (AEHT…YDDD). Asn-41 and Asn-84 each carry an N-linked (GlcNAc...) asparagine glycan. 2 residues coordinate Cu cation: His-88 and His-90. N-linked (GlcNAc...) asparagine glycosylation occurs at Asn-126. Cu cation contacts are provided by His-137 and His-139. Residues Asn-179, Asn-251, Asn-304, Asn-338, Asn-388, Asn-400, Asn-446, and Asn-464 are each glycosylated (N-linked (GlcNAc...) asparagine). The Plastocyanin-like 3 domain maps to 426-567 (DFPDRPPVMF…AMAFDVQDGP (142 aa)). 7 residues coordinate Cu cation: His-482, His-485, His-487, His-546, Cys-547, His-548, and His-552.

Belongs to the multicopper oxidase family. Cu cation serves as cofactor.

The protein localises to the secreted. It is found in the extracellular space. It localises to the apoplast. It catalyses the reaction 4 hydroquinone + O2 = 4 benzosemiquinone + 2 H2O. Functionally, lignin degradation and detoxification of lignin-derived products. The polypeptide is Laccase-14 (LAC14) (Oryza sativa subsp. japonica (Rice)).